Consider the following 439-residue polypeptide: UPF0229 protein Nham_0975 (439 aa).

The segment at 39-106 (RSGRISDADG…AGTPDPSMKD (68 aa)) is disordered. The span at 58 to 76 (STDEPRFEAAKDSGRREHV) shows a compositional bias: basic and acidic residues.

It belongs to the UPF0229 family.

The chain is UPF0229 protein Nham_0975 from Nitrobacter hamburgensis (strain DSM 10229 / NCIMB 13809 / X14).